We begin with the raw amino-acid sequence, 428 residues long: Chaperone SurA (428 aa).

Residues 1-19 form the signal peptide; that stretch reads MNIWKTLLLGMLVTGSAVS. PpiC domains follow at residues 170–268 and 277–377; these read SVEY…KIED and VTEV…EVLD.

Its subcellular location is the periplasm. It catalyses the reaction [protein]-peptidylproline (omega=180) = [protein]-peptidylproline (omega=0). Chaperone involved in the correct folding and assembly of outer membrane proteins. Recognizes specific patterns of aromatic residues and the orientation of their side chains, which are found more frequently in integral outer membrane proteins. May act in both early periplasmic and late outer membrane-associated steps of protein maturation. The sequence is that of Chaperone SurA from Vibrio vulnificus (strain CMCP6).